A 690-amino-acid chain; its full sequence is Molting protein mlt-10 (690 aa).

Residues 1 to 18 (MRNLNLILFTALAAVTYA) form the signal peptide. Residues Asn-42 and Asn-204 are each glycosylated (N-linked (GlcNAc...) asparagine). Residues 219 to 285 (IKKLGEEAKR…MRKKEADEIR (67 aa)) adopt a coiled-coil conformation. Asn-305 and Asn-415 each carry an N-linked (GlcNAc...) asparagine glycan. The next 5 helical transmembrane spans lie at 514-534 (PFIL…FIVL), 544-564 (LSPA…PLIL), 579-599 (FSPI…PGVF), 618-638 (VFTP…TPMV), and 643-663 (ILSP…FAVV).

The protein belongs to the mlt-10-like family. In terms of tissue distribution, expressed in the major body hypodermal syncytium (Hyp7), the dorsal and ventral ridges of the hypodermis, hypodermal cells in the head and tail, and the pharyngeal myoepithelium, but not the lateral seam cells.

Its subcellular location is the membrane. It localises to the secreted. In terms of biological role, required for the efficient removal of larval cuticles during the molting cycle as well as the synthesis of new cuticles. The sequence is that of Molting protein mlt-10 from Caenorhabditis elegans.